Reading from the N-terminus, the 468-residue chain is Replication factor C large subunit (468 aa).

50–57 (GPPGSGKT) contacts ATP. Residues 422-456 (EEKAVEEKVEEEEAEEEEEEERKEEEKPKAEKKKG) are disordered. Over residues 429–444 (KVEEEEAEEEEEEERK) the composition is skewed to acidic residues.

It belongs to the activator 1 small subunits family. RfcL subfamily. Heteromultimer composed of small subunits (RfcS) and large subunits (RfcL).

In terms of biological role, part of the RFC clamp loader complex which loads the PCNA sliding clamp onto DNA. The sequence is that of Replication factor C large subunit from Pyrococcus horikoshii (strain ATCC 700860 / DSM 12428 / JCM 9974 / NBRC 100139 / OT-3).